The chain runs to 270 residues: Palmitoyltransferase ZDHHC12-A (270 aa).

Topologically, residues 1 to 8 are cytoplasmic; it reads MNKSLFKS. The chain crosses the membrane as a helical span at residues 9–29; it reads GCLVRTAHVILTWIITLILFL. Residues 30–45 lie on the Lumenal side of the membrane; sequence HNTDLRRCQERGDLLQ. Residues 46 to 66 form a helical membrane-spanning segment; sequence PLVFSSVLLLSVLLYFTVSLM. Residues 67–145 lie on the Cytoplasmic side of the membrane; sequence DPGFVLSDSQ…DNCVGELNHR (79 aa). The region spanning 102–152 is the DHHC domain; that stretch reads RRCGYCFLLQPMRARHCKWCKRCVRRFDHHCPWIDNCVGELNHRWFLLYLC. The active-site S-palmitoyl cysteine intermediate is Cys132. Residues 146–166 form a helical membrane-spanning segment; the sequence is WFLLYLCVQFTAVCWGLQSAW. The Lumenal segment spans residues 167-182; that stretch reads SGFISAPSWQQWFTQN. The chain crosses the membrane as a helical span at residues 183-203; it reads VFLLVAFAVTAVFSVVLLLLL. At 204 to 270 the chain is on the cytoplasmic side; sequence CIHAYLASVN…MYIRHNNASV (67 aa).

It belongs to the DHHC palmitoyltransferase family.

It localises to the golgi apparatus membrane. The protein localises to the endoplasmic reticulum membrane. It carries out the reaction L-cysteinyl-[protein] + hexadecanoyl-CoA = S-hexadecanoyl-L-cysteinyl-[protein] + CoA. Its function is as follows. Palmitoyltransferase that catalyzes the addition of palmitate onto various protein substrates. Has a palmitoyltransferase activity toward gephyrin/GPHN, regulating its clustering at synapses and its function in gamma-aminobutyric acid receptor clustering. Acts as an inhibitor of the NLRP3 inflammasome by mediating palmitoylation of NLRP3, thereby promoting NLRP3 degradation by the chaperone-mediated autophagy (CMA) process. The protein is Palmitoyltransferase ZDHHC12-A of Danio rerio (Zebrafish).